The sequence spans 281 residues: Splicing regulator RBM11 (281 aa).

An RRM domain is found at 10–87 (RTVFVGNLEA…RPINVQYRFG (78 aa)). The disordered stretch occupies residues 184-281 (PSSYKWTHQQ…FRKSKKKKRY (98 aa)). 2 stretches are compositionally biased toward polar residues: residues 187 to 217 (YKWTHQQPSDSDLYQMTAPLPNSASVSSSLN) and 229 to 242 (YKWTHQQPSDSDLY). The Bipartite nuclear localization signal signature appears at 245-280 (NKRKRQKQTSDSDSSTDNNRGNECSQKFRKSKKKKR). Residues 271–281 (KFRKSKKKKRY) are compositionally biased toward basic residues.

As to quaternary structure, homodimer. Expressed in brain, hippocampus, prefrontal cortex, cerebellum, spinal cord, testis, mammary gland, spleen and kidney. Also expressed in fetal brain.

It is found in the nucleus. Its subcellular location is the nucleoplasm. It localises to the nucleus speckle. Its function is as follows. Tissue-specific splicing factor with potential implication in the regulation of alternative splicing during neuron and germ cell differentiation. Antagonizes SRSF1-mediated BCL-X splicing. May affect the choice of alternative 5' splice sites by binding to specific sequences in exons and antagonizing the SR protein SRSF1. In Homo sapiens (Human), this protein is Splicing regulator RBM11.